The chain runs to 488 residues: GTPase Der (488 aa).

2 EngA-type G domains span residues 3–166 (PVIA…PRDP) and 193–366 (IKIA…MSAV). GTP contacts are provided by residues 9–16 (GRPNVGKS), 56–60 (DTGGI), 118–121 (NKID), 199–206 (GRPNVGKS), 246–250 (DTAGV), and 311–314 (NKWD). The 85-residue stretch at 367–451 (TRWPTSRLTQ…PIRIEYKGGD (85 aa)) folds into the KH-like domain. The segment covering 449–461 (GGDNPFEGKKNTL) has biased composition (basic and acidic residues). Residues 449–488 (GGDNPFEGKKNTLTDRQVNKKRRLMSHHKKAEKKRRDKRK) form a disordered region. A compositionally biased stretch (basic residues) spans 467–488 (NKKRRLMSHHKKAEKKRRDKRK).

This sequence belongs to the TRAFAC class TrmE-Era-EngA-EngB-Septin-like GTPase superfamily. EngA (Der) GTPase family. As to quaternary structure, associates with the 50S ribosomal subunit.

Its function is as follows. GTPase that plays an essential role in the late steps of ribosome biogenesis. The polypeptide is GTPase Der (Pseudomonas entomophila (strain L48)).